Reading from the N-terminus, the 393-residue chain is Formate-dependent phosphoribosylglycinamide formyltransferase (393 aa).

N(1)-(5-phospho-beta-D-ribosyl)glycinamide contacts are provided by residues 22–23 (EL) and E82. ATP contacts are provided by residues R114, K155, 160–165 (SSGKGQ), 195–198 (EGFI), and E203. Residues 119–308 (RLAAEELKLP…QFALHARAIL (190 aa)) form the ATP-grasp domain. The Mg(2+) site is built by E267 and E279. N(1)-(5-phospho-beta-D-ribosyl)glycinamide contacts are provided by residues D286, K356, and 363–364 (RR).

Belongs to the PurK/PurT family. In terms of assembly, homodimer.

The catalysed reaction is N(1)-(5-phospho-beta-D-ribosyl)glycinamide + formate + ATP = N(2)-formyl-N(1)-(5-phospho-beta-D-ribosyl)glycinamide + ADP + phosphate + H(+). The protein operates within purine metabolism; IMP biosynthesis via de novo pathway; N(2)-formyl-N(1)-(5-phospho-D-ribosyl)glycinamide from N(1)-(5-phospho-D-ribosyl)glycinamide (formate route): step 1/1. Its function is as follows. Involved in the de novo purine biosynthesis. Catalyzes the transfer of formate to 5-phospho-ribosyl-glycinamide (GAR), producing 5-phospho-ribosyl-N-formylglycinamide (FGAR). Formate is provided by PurU via hydrolysis of 10-formyl-tetrahydrofolate. This is Formate-dependent phosphoribosylglycinamide formyltransferase from Pseudomonas syringae pv. tomato (strain ATCC BAA-871 / DC3000).